A 196-amino-acid chain; its full sequence is Gastrula zinc finger protein XlCGF64.1 (196 aa).

7 consecutive C2H2-type zinc fingers follow at residues 6–28 (YECP…QRGH), 34–56 (FMCT…QFIH), 62–84 (YVCT…QRGH), 90–112 (FTCT…QFIH), 118–140 (YECT…QRGH), 146–168 (FMCT…QFIH), and 174–196 (LMCT…KLSH).

The protein belongs to the krueppel C2H2-type zinc-finger protein family.

Its subcellular location is the nucleus. May be involved in transcriptional regulation. The sequence is that of Gastrula zinc finger protein XlCGF64.1 from Xenopus laevis (African clawed frog).